We begin with the raw amino-acid sequence, 131 residues long: UPF0102 protein YraN (131 aa).

A compositionally biased stretch (polar residues) spans 1–19 (MATVPTRSGSPRQLTTKQT). The segment at 1 to 20 (MATVPTRSGSPRQLTTKQTG) is disordered.

This sequence belongs to the UPF0102 family.

This chain is UPF0102 protein YraN, found in Escherichia coli O8 (strain IAI1).